Reading from the N-terminus, the 594-residue chain is Type IV inositol polyphosphate 5-phosphatase 7 (594 aa).

The disordered stretch occupies residues 246–300 (FRCGHRPSDYSRRPSDYSRPSDYYSRPSNYSRPSDVSRWGSSDDDNGPGDSPSTF). Basic and acidic residues predominate over residues 251 to 261 (RPSDYSRRPSD). The span at 262 to 279 (YSRPSDYYSRPSNYSRPS) shows a compositional bias: low complexity. Catalytic regions lie at residues 435-450 (DRVIWLGDLNYRIALS) and 515-530 (KRRTPAWCDRILWHGE).

The protein belongs to the inositol polyphosphate 5-phosphatase family. In terms of tissue distribution, broadly expressed in emerging organs. Mostly localized in procambium of growing organs. Restricted to vascular differentiating cells of young organs.

It is found in the nucleus. It localises to the cell membrane. It catalyses the reaction a 1,2-diacyl-sn-glycero-3-phospho-(1D-myo-inositol-4,5-bisphosphate) + H2O = a 1,2-diacyl-sn-glycero-3-phospho-(1D-myo-inositol 4-phosphate) + phosphate. It carries out the reaction a 1,2-diacyl-sn-glycero-3-phospho-(1D-myo-inositol-3,4,5-trisphosphate) + H2O = a 1,2-diacyl-sn-glycero-3-phospho-(1D-myo-inositol-3,4-bisphosphate) + phosphate. Functionally, has phosphatase activity toward PtdIns(4,5)P2 and at a lower extent toward PtdIns(3,4,5)P3 but not toward Ins(1,4,5)P3. Acts redundantly with CVP2 for maintaining vascular continuity. Regulates phosphoinositide-dependent VAN3 localization. Functions in salt stress response by regulating reactive oxygen species (ROS) production and stress-responsive genes expression. This chain is Type IV inositol polyphosphate 5-phosphatase 7, found in Arabidopsis thaliana (Mouse-ear cress).